A 77-amino-acid polypeptide reads, in one-letter code: Large ribosomal subunit protein bL28 (77 aa).

This sequence belongs to the bacterial ribosomal protein bL28 family.

The polypeptide is Large ribosomal subunit protein bL28 (Polaromonas sp. (strain JS666 / ATCC BAA-500)).